We begin with the raw amino-acid sequence, 513 residues long: Pantetheinase (513 aa).

A signal peptide spans 1 to 21 (MTTQLPAYVAILLFYVSRASC). Residue asparagine 38 is glycosylated (N-linked (GlcNAc...) asparagine). Residues 39-306 (ATLTPVSREE…GKLLLSQLDS (268 aa)) form the CN hydrolase domain. Residue glutamate 79 is the Proton acceptor of the active site. N-linked (GlcNAc...) asparagine glycosylation occurs at asparagine 130. Lysine 178 serves as the catalytic Proton donor. Residue asparagine 200 is glycosylated (N-linked (GlcNAc...) asparagine). Residue cysteine 211 is the Nucleophile of the active site. N-linked (GlcNAc...) asparagine glycans are attached at residues asparagine 283, asparagine 315, and asparagine 353. Glycine 491 carries the GPI-anchor amidated glycine lipid modification. Positions 492–513 (LTAQARIIMLIVIAPIVCSLSW) are cleaved as a propeptide — removed in mature form.

This sequence belongs to the carbon-nitrogen hydrolase superfamily. BTD/VNN family. As to quaternary structure, monomer. In terms of tissue distribution, widely expressed with higher expression in spleen, kidney and blood. Overexpressed in lesional psoriatic skin.

Its subcellular location is the cell membrane. It carries out the reaction (R)-pantetheine + H2O = cysteamine + (R)-pantothenate. Its function is as follows. Amidohydrolase that hydrolyzes specifically one of the carboamide linkages in D-pantetheine thus recycling pantothenic acid (vitamin B5) and releasing cysteamine. This is Pantetheinase (VNN1) from Homo sapiens (Human).